Consider the following 475-residue polypeptide: ATP synthase subunit beta (475 aa).

156-163 (GGAGVGKT) is a binding site for ATP.

Belongs to the ATPase alpha/beta chains family. F-type ATPases have 2 components, CF(1) - the catalytic core - and CF(0) - the membrane proton channel. CF(1) has five subunits: alpha(3), beta(3), gamma(1), delta(1), epsilon(1). CF(0) has three main subunits: a(1), b(2) and c(9-12). The alpha and beta chains form an alternating ring which encloses part of the gamma chain. CF(1) is attached to CF(0) by a central stalk formed by the gamma and epsilon chains, while a peripheral stalk is formed by the delta and b chains.

It is found in the cell membrane. It carries out the reaction ATP + H2O + 4 H(+)(in) = ADP + phosphate + 5 H(+)(out). Functionally, produces ATP from ADP in the presence of a proton gradient across the membrane. The catalytic sites are hosted primarily by the beta subunits. This Mycoplasma pneumoniae (strain ATCC 29342 / M129 / Subtype 1) (Mycoplasmoides pneumoniae) protein is ATP synthase subunit beta.